The following is a 359-amino-acid chain: CDP-glucose 4,6-dehydratase (359 aa).

The protein belongs to the NAD(P)-dependent epimerase/dehydratase family. NAD(+) serves as cofactor.

The catalysed reaction is CDP-D-glucose = CDP-4-dehydro-6-deoxy-D-glucose + H2O. It participates in nucleotide-sugar biosynthesis; CDP-3,6-dideoxy-D-mannose biosynthesis; CDP-3,6-dideoxy-D-mannose from CTP and alpha-D-glucose 1-phosphate: step 2/5. It functions in the pathway bacterial outer membrane biogenesis; LPS O-antigen biosynthesis. In Salmonella typhimurium (strain LT2 / SGSC1412 / ATCC 700720), this protein is CDP-glucose 4,6-dehydratase (rfbG).